Consider the following 253-residue polypeptide: Protein C1orf43 homolog (253 aa).

A helical transmembrane segment spans residues 11-31 (VNVVLVMAYGSLVFVLLFIFV).

The protein resides in the membrane. It localises to the golgi apparatus. The protein localises to the mitochondrion. In terms of biological role, general regulator of phagocytosis. Required to uptake Gram negative bacterium by macrophages. This chain is Protein C1orf43 homolog, found in Mus musculus (Mouse).